A 355-amino-acid polypeptide reads, in one-letter code: MLDRLQAVEDRYEKLNELLSDPAVINDSNKLREYSKEQSDIQETVEVYREYKDVREQLQDAKAMLEDKLDAEMREMVKEEVSDLEVQEKELSDRLKILLVPKDPNDDKNVIVEIRGAAGGDEAALFAGDLYRMYSRYAEMQGWKTDIIEASYTELGGYKEIIFMINGKGAYAKLKFENGAHRVQRVPETESGGRIHTSTATVAVLPEAEEVEIDIHEKDIRVDTFASSGPGGQSVNTTMSAVRLTHLPTGVVVSCQDEKSQIKNKEKAMKVLRARIYDKFRQEAQAEYDQNRKQAVGTGDRSERIRTYNFPQNRVTDHRIGLTIQKLDQILQGKLDDFINALVMEDQAKKMEAAE.

Glutamine 233 carries the N5-methylglutamine modification.

It belongs to the prokaryotic/mitochondrial release factor family. Methylated by PrmC. Methylation increases the termination efficiency of RF1.

It localises to the cytoplasm. Its function is as follows. Peptide chain release factor 1 directs the termination of translation in response to the peptide chain termination codons UAG and UAA. This Bacillus cytotoxicus (strain DSM 22905 / CIP 110041 / 391-98 / NVH 391-98) protein is Peptide chain release factor 1.